Here is a 521-residue protein sequence, read N- to C-terminus: Importin subunit alpha-3 (521 aa).

N-acetylalanine is present on alanine 2. Positions 2–58 (ADNEKLDNQRLKNFKNKGRDLETMRRQRNEVVVELRKNKRDEHLLKRRNVPHEDICE) constitute an IBB domain. Residues 43 to 52 (EHLLKRRNVP) carry the Nuclear localization signal motif. Serine 60 is modified (phosphoserine). The stretch at 66–106 (YRVQNTSLEAIVQNASSDNQGIQLSAVQAARKLLSSDRNPP) is one ARM 1; truncated repeat. 8 ARM repeats span residues 107–149 (IDDL…TSEQ), 150–194 (TQAV…CRDY), 195–233 (VISL…HKDP), 234–278 (PPPM…EQIQ), 279–318 (MVID…TDEQ), 319–360 (TQVV…NQQQ), 361–400 (VQAV…ISGR), and 401–443 (KDQV…KMAE). An NLS binding site (major) region spans residues 137 to 229 (WALTNIASGT…VTWVMVNLCR (93 aa)). Positions 306-394 (RAVGNIVTGT…QKEAAWAISN (89 aa)) are NLS binding site (minor). The ARM 10; atypical repeat unit spans residues 447 to 485 (ETIGNLIEECGGLEKIEQLQNHENEDIYKLAYEIIDQFF).

It belongs to the importin alpha family. In terms of assembly, forms a complex with importin subunit beta-1 (KPNB1). Interacts with SNAI1. Interacts with TALDO1 isoform 1. Interacts with CYB1. (Microbial infection) Interacts with MERS virus protein OF4b; this interaction prevents the translocation of NF-kappa-B complex to the nucleus. As to quaternary structure, (Microbial infection) Interacts with human adenovirus 5 E1A protein; this interaction allows E1A import into the host nucleus. In terms of assembly, (Microbial infection) Interacts with Chikungunya virus capsid protein; this interaction allows the nuclear import of the viral capsid protein. Highly expressed in testis, ovary, small intestine, heart, skeletal muscle, lung and pancreas, but barely detectable in kidney, thymus, colon and peripheral blood leukocytes.

The protein localises to the cytoplasm. Its subcellular location is the nucleus. Functionally, functions in nuclear protein import as an adapter protein for nuclear receptor KPNB1. Binds specifically and directly to substrates containing either a simple or bipartite NLS motif. Docking of the importin/substrate complex to the nuclear pore complex (NPC) is mediated by KPNB1 through binding to nucleoporin FxFG repeats and the complex is subsequently translocated through the pore by an energy requiring, Ran-dependent mechanism. At the nucleoplasmic side of the NPC, Ran binds to importin-beta and the three components separate and importin-alpha and -beta are re-exported from the nucleus to the cytoplasm where GTP hydrolysis releases Ran from importin. The directionality of nuclear import is thought to be conferred by an asymmetric distribution of the GTP- and GDP-bound forms of Ran between the cytoplasm and nucleus. Mediates nuclear import of AARS1, MRTFA and RANBP3. In terms of biological role, (Microbial infection) In vitro, mediates the nuclear import of human cytomegalovirus UL84 by recognizing a non-classical NLS. In vitro, mediates the nuclear import of human cytomegalovirus UL84 by recognizing a non-classical NLS. In Homo sapiens (Human), this protein is Importin subunit alpha-3.